The sequence spans 160 residues: Cytochrome b6-f complex subunit 4 (160 aa).

The next 3 helical transmembrane spans lie at 36 to 56 (LLYV…ALAV), 95 to 115 (LLGV…PFIE), and 131 to 151 (TVFL…ALPL).

This sequence belongs to the cytochrome b family. PetD subfamily. As to quaternary structure, the 4 large subunits of the cytochrome b6-f complex are cytochrome b6, subunit IV (17 kDa polypeptide, PetD), cytochrome f and the Rieske protein, while the 4 small subunits are PetG, PetL, PetM and PetN. The complex functions as a dimer.

The protein localises to the cellular thylakoid membrane. Its function is as follows. Component of the cytochrome b6-f complex, which mediates electron transfer between photosystem II (PSII) and photosystem I (PSI), cyclic electron flow around PSI, and state transitions. The chain is Cytochrome b6-f complex subunit 4 from Trichormus variabilis (strain ATCC 29413 / PCC 7937) (Anabaena variabilis).